A 256-amino-acid chain; its full sequence is N-glycosylase/DNA lyase (256 aa).

Residues glutamine 31, serine 58, and tryptophan 69 each coordinate 8-oxoguanine. The tract at residues threonine 125–leucine 184 is helix-hairpin-helix. Lysine 140 serves as the catalytic Schiff-base intermediate with DNA. 8-oxoguanine-binding residues include phenylalanine 144 and proline 170. The active site involves aspartate 172. 8-oxoguanine contacts are provided by aspartate 218 and tryptophan 222.

The protein belongs to the archaeal N-glycosylase/DNA lyase (AGOG) family.

It catalyses the reaction 2'-deoxyribonucleotide-(2'-deoxyribose 5'-phosphate)-2'-deoxyribonucleotide-DNA = a 3'-end 2'-deoxyribonucleotide-(2,3-dehydro-2,3-deoxyribose 5'-phosphate)-DNA + a 5'-end 5'-phospho-2'-deoxyribonucleoside-DNA + H(+). Functionally, DNA repair enzyme that is part of the base excision repair (BER) pathway; protects from oxidative damage by removing the major product of DNA oxidation, 8-oxoguanine (GO), from single- and double-stranded DNA substrates. This Pyrobaculum aerophilum (strain ATCC 51768 / DSM 7523 / JCM 9630 / CIP 104966 / NBRC 100827 / IM2) protein is N-glycosylase/DNA lyase.